Consider the following 3767-residue polypeptide: MQAGISIFFLFLHIPIFFVNCSNSTSCVAREEFQCKMDDSCISMKKWQDGVDDCYDGSDEVCLPWQFDCQFGSPRCISKNKLHDKKIDCYSGFDEGCPAHYFVCRDRSACIEPSKYLNGVADCKDKSDEPCAQNQFQCSDGTKCIPKAQFQDGKEDCDDGSDEECTTSQFACQCGTIKCVSDTFIMDGNWDCEDGSDEFINKTLTANCTRNNKVNIATNSLSLGKLKFCSGKNPCKPELGQVCVIIGGTWRCVCKLGTFRPLGSDKCIPIELLTRYRNAPSSKCSNSHEEQFGLLQGFQKSLSSRKELERWSNIRRAPPRTLSGTTPSGSDGFLKSGAEQVPFMFQEDKNYVSVIPDEIIDSYGTIMTPPEFHFNRDDIRCGNKTCGLHESCQKNSESKYECICREGFTIFEGTCRELIDECAQGKHDCHPEARCVDALIGYECLCREGYLDTSIDPKARPGRKCRKLINECTNALMNDCSQNARCLDKPIGYTCRCQDDYVDVSREGARKPGRNCTQAINECASNLHNCDTHAICQDQPVGYSCRCPFGFIDSSPTALEPGRKCVQANNEAATTSTTTSQCIKEKNGETVCKCLLGYKNVGTKTHLNCQMEKRANPCQDYSLHDCDPVAECFSEQPGYFQCQCPKGFTDSSADKRFPGRKCVRAVDECALGRHTCDPHADCIDTHQGYTCKCRSGWSDTSLDPLRSPGRSCKKADMCSNIDCAAEAECRETPIGPMCQCVSGYVDVSRQHGRPAGRVCRAVVNECAEGRHDCSSHATCIDTADGFTCRCKDSYRDESSDTLKHPGKNCVRTVQPDPPECDVSDPMSCDPAKREVCIFVENTYKCRCANGYSRLPDGRCVVINECAEPRLNTCGKNAECIDLAEGYTCQCRSGYADISPVSQPGRICRARVNECSNKEKYNVDCSENAICADTEHSYSCRCRPGFADVSAAFNKLPGRRCIEAVNECASPSLNDCSKNAFCEDAKEGYICTCRPGYVDNSPNAARHPGRICTKPVEKIKTDLKDTSFSTDDGCDPKNPKCGANEACVQRHGQHNCECVETAFRYTDGSCRVYSACSKRNTCDKNAICLNRFDSYTCQCRPGYIDLSADLTNAPGRICKELINECASSDNECSPYARCIDATNGYACQCLDGFIDVSSRYNKPPGRQCTNSNNECSEKSLNTCDENADCVDTPDGYTCQCYGGFVDVSSNANLPPGRVCTVQTTCPKQKTDLVFLIDGSGSIGSYVFKNEVLRFVREFVELFEIGRSKTRVGLIQYSDQIRHEFDLDQYGDRDSLLKGISETQYLTGLTRTGAAIQHMVQEGFSERRGARPQQSDIARVAIILTDGRSQDNVTGPADSARKLSINTFAIGVTDHVLASELESIAGSPNRWFYVDKFKDLDTRLRSMIQKAACPSPTKQETPSEDVCNPRTQTGCDRSLNEHCAVENGRPRCVCPEGFTRHPFTRVCGGDLCNPQLITSCIFPEECQITPYKNFRCSCPEGYNRDYRSGFCVSVKEVQISPQHDANCHNGGVRCSENERCTNDGSDWFCECLPGFERIRNGQCAYPGSCNPNDPMSCDVRKRQQCLPRGNIYTCQCGRNEKRHPITDICLKNECLTGEHDCDRSARCIDTDESYICACQSGFIDHSPNPSERPGRVCVALQNECLDGSNRCSPNALCTDTEEGYVCRCKSGFVDYSPNPQTFPGMVCKELVNECTNPRLNQCDRNAHCIDTIEGYSCICKPGFVDMDEFGNPGRRCEQIKTNDKCSPGKNDCDRNARCIQIGDDDYSCACPPGFKDKSPSSSRPGRLCIPVIPECDNPTLNDCDSPDRAVCTDTDDGYMCRCRQGFLDISPSISVKPGRLCKPLQNECALGIDDCARDGGICEDNPDSFTCRCAMNYLDVSFDRVTRPGRKCKRLINECQTGQNDCSEEATCTDTEDSYICACPQSHIDLSPDTVNRPGRRCLMRINECTSNRHDCSPNADCIDTPESYKCRCRDDFVDESPDSSRRPGRICRPALVDECRTGKHDCHVNAICQDLPQGYTCQCSADFVDVSPHRASHPGRLCQPRPTPPPPECRLDGGNQCKVHLNEVCRLMGGEPKCSCPVNYQRDSSGSCSIINECLFTQLNDCHTAADCIDQVQGYTCQCRDGFKDIGDRRRPGRMCKPMVNECQYPHLNDCHQNAACIDLEEGYECKCNQGFMDHSHGRPGRICKQLTNECLRPSLNSCDRNARCIDKEEGYECECRDGFIDVSPSPTLKGRACRELVNECANSRLNDCDKNARCKDTMDSYECDCPVNSKDISPSPSFPGRVCLMFINECESGVHDCDPSATCRDNEQSFTCECPSGFVDRSPNKHARPGRVCVKLVDECREGRHTCSSHADCRDLEEGYTCECRDGYVDRSPNLASQPGRVCSAPEVCPPNHDCSSAAVCEPLGGMKYQCVCIQGYVDQSPGSQKGRVCVRNNACHDPRLNTCSRNAICYDEPRGYRCECKRGFMDRSPDSSQRGRVCEPPPPPSPPPRHPCQDPERNDCHPAGTCRATGAQSYTCECLSGYADRSPDPRNKPGRLCVLTEPVCLDPEQNDCHAAAICSEVNGPEKYTCKCRDGYTDESPDPLRRPGRICKGLINECLDRSLNDCHSLAVCKDLPNGYTCQCPINAKDQSPDPRKPGRICSLSVNECANPSLNSCSAFADCFDEENGYRCRCRNGYHDDDPAHPGHRCSFMINECDSSNLNDCDRNANCIDTAGGYDCACKAPYRDEGPPQSPGRICRLNECLNPNRNTCDRNADCRDLDYGYTCTCRHGFYDQSPNPQEPGRICIEFQQEEHIERVKVTTVQSEPRREFPCGRDDCIKARGEVCISGEYCGCKPGEGRSASTGKCQEVQETPFELRVVTRDQRPLMYSTEFGSQKSPSYVEIVELFEKNMARTFGGTSLAPRYVNTKVDYITHPKTKNSSWDQGLLFKYEVQTTKSQSQPIDECELWKQMQASLDRTNGAIGGGSLRVASDTDLLNPCKQQEEWGNCGGMSCKEHLKEVCIAGHICGCPDGMKRRDANSECRVVESWNVPLWVVRDKEKPIVFSESFDNPQTPVYKDYSKRLEKGIEGCYPHTELKNAFVTAEVNDIVNPVLMNASYDTGLLFNTTVHFRKGMVHVPSDAYYQLIKYVTKENNNEVGDSELYLNPTQPDPFNPCFKNDCDPHGKCIEISKYAYKCECGVGYRDINPQSPGKKCLPVHGFNECERKEDNECSENARCIDLEHLYKCECLPSYYDTSPVGSVPGSLCVLDYCSDVNFCPTNTTCKNMEQQAECKCDAGFMDIRKSEKRTALMLGDDTLCMHVRDVDECALGLNNCSGVAHCIDRAVGYTCKCPDGYIDGNPDEPGRVCGALLCDLCNAHGDCVHNTATNNITCVCTDGWTGPQCQVAPSNASLVLLILLALLFLLLTLCCLLYFCTKCHCFKGRRFAGAGANGFGYRRGGAWPWSTLEGSASSESGAEFSAMSAAGNDYYPDIGIPRAKLKSGMMASGNTAEVRNMEVARLDQYLDENAVRIPRAHLVDAHGDTSFDSLSEASSEYTIKEEIERKVITDVTTKEIKTTTTTDEQGNTIVTTTEAVHPRDTTIVHGGGYTQNESSSSSFSGGERAYQSQSQQQQSMSQGMSQSMSQHATSAGYSSSGMESSAHNSGYASIRHTGERERGGSEEEFSIGRARGMAAASSGYQHSSSENREVEEYCSEEEDVEHSVGDKRTIVTKNHSYEPFVNGESERFKTEVVTSQTSTHVTKK.

The signal sequence occupies residues 1 to 24 (MQAGISIFFLFLHIPIFFVNCSNS). Over 25-3417 (TSCVAREEFQ…CQVAPSNASL (3393 aa)) the chain is Extracellular. The 38-residue stretch at 26 to 63 (SCVAREEFQCKMDDSCISMKKWQDGVDDCYDGSDEVCL) folds into the LDL-receptor class A 1 domain. 10 disulfide bridges follow: Cys27–Cys41, Cys35–Cys54, Cys62–Cys76, Cys69–Cys89, Cys97–Cys110, Cys104–Cys123, Cys131–Cys144, Cys138–Cys157, Cys165–Cys179, and Cys172–Cys192. LDL-receptor class A domains lie at 96-132 (GCPAHYFVCRDRSACIEPSKYLNGVADCKDKSDEPCA), 133-166 (QNQFQCSDGTKCIPKAQFQDGKEDCDDGSDEECT), and 167-209 (TSQF…ANCT). Residues Asn201 and Asn207 are each glycosylated (N-linked (GlcNAc...) asparagine). EGF-like domains follow at residues 225–268 (KLKF…DKCI), 375–416 (NRDD…GTCR), 418–466 (LIDE…RKCR), 468–517 (LINE…RNCT), 519–566 (AINE…RKCV), 614–663 (RANP…RKCV), 665–713 (AVDE…RSCK), 714–760 (KADM…RVCR), 762–810 (VVNE…KNCV), 816–860 (DPPE…GRCV), 861–908 (VINE…RICR), 910–961 (RVNE…RRCI), 963–1012 (AVNE…RICT), 1029–1070 (TDDG…GSCR), 1071–1118 (VYSA…RICK), 1120–1168 (LINE…RQCT), and 1170–1219 (SNNE…RVCT). 51 disulfides stabilise this stretch: Cys229–Cys243, Cys235–Cys252, Cys254–Cys267, Cys381–Cys392, Cys386–Cys402, Cys404–Cys415, Cys422–Cys435, Cys429–Cys444, Cys446–Cys465, Cys472–Cys486, Cys480–Cys495, Cys497–Cys516, Cys523–Cys536, Cys530–Cys545, Cys547–Cys565, Cys618–Cys632, Cys626–Cys642, Cys644–Cys662, Cys669–Cys682, Cys676–Cys691, Cys693–Cys712, Cys718–Cys729, Cys723–Cys738, Cys740–Cys759, Cys766–Cys779, Cys773–Cys788, Cys790–Cys809, Cys820–Cys836, Cys828–Cys845, Cys847–Cys859, Cys865–Cys879, Cys873–Cys888, Cys890–Cys907, Cys914–Cys930, Cys924–Cys939, Cys941–Cys960, Cys967–Cys981, Cys975–Cys990, Cys992–Cys1011, Cys1033–Cys1046, Cys1040–Cys1055, Cys1057–Cys1069, Cys1075–Cys1087, Cys1081–Cys1096, Cys1098–Cys1117, Cys1124–Cys1137, Cys1131–Cys1146, Cys1148–Cys1167, Cys1174–Cys1188, Cys1182–Cys1197, and Cys1199–Cys1218. Asn383 carries an N-linked (GlcNAc...) asparagine glycan. Residue Asn515 is glycosylated (N-linked (GlcNAc...) asparagine). Residues 1230–1406 (DLVFLIDGSG…DLDTRLRSMI (177 aa)) form the VWFA domain. N-linked (GlcNAc...) asparagine glycosylation is present at Asn1350. 29 consecutive EGF-like domains span residues 1421-1466 (SEDV…RVCG), 1466-1510 (GGDL…GFCV), 1521-1562 (HDAN…GQCA), 1563-1608 (YPGS…DICL), 1608-1656 (LKNE…RVCV), 1658-1706 (LQNE…MVCK), 1708-1755 (LVNE…RRCE), 1759-1807 (TNDK…RLCI), 1809-1860 (VIPE…RLCK), 1862-1911 (LQNE…RKCK), 1913-1961 (LINE…RRCL), 1963-2011 (RINE…RICR), 2014-2062 (LVDE…RLCQ), 2068-2112 (PPPE…GSCS), 2113-2160 (IINE…RMCK), 2162-2208 (MVNE…RICK), 2210-2258 (LTNE…RACR), 2260-2308 (LVNE…RVCL), 2310-2358 (FINE…RVCV), 2360-2408 (LVDE…RVCS), 2409-2455 (APEV…RVCV), 2456-2504 (RNNA…RVCE), 2513-2563 (PRHP…RLCV), 2565-2616 (TEPV…RICK), 2618-2666 (LINE…RICS), 2668-2714 (SVNE…HRCS), 2716-2763 (MINE…RICR), 2763-2811 (RLNE…RICI), and 2833-2872 (REFPCGRDDCIKARGEVCISGEYCGCKPGEGRSASTGKCQ). 66 disulfides stabilise this stretch: Cys1425–Cys1441, Cys1433–Cys1450, Cys1452–Cys1465, Cys1470–Cys1484, Cys1478–Cys1494, Cys1496–Cys1509, Cys1525–Cys1538, Cys1532–Cys1547, Cys1549–Cys1561, Cys1567–Cys1583, Cys1575–Cys1592, Cys1594–Cys1607, Cys1612–Cys1625, Cys1619–Cys1634, Cys1636–Cys1655, Cys1662–Cys1675, Cys1669–Cys1684, Cys1686–Cys1705, Cys1712–Cys1726, Cys1720–Cys1735, Cys1737–Cys1754, Cys1763–Cys1776, Cys1770–Cys1786, Cys1788–Cys1806, Cys1813–Cys1829, Cys1821–Cys1838, Cys1840–Cys1859, Cys1866–Cys1880, Cys1873–Cys1889, Cys1891–Cys1910, Cys1917–Cys1930, Cys1924–Cys1939, Cys1941–Cys1960, Cys1967–Cys1980, Cys1974–Cys1989, Cys1991–Cys2010, Cys2018–Cys2031, Cys2025–Cys2040, Cys2042–Cys2061, Cys2072–Cys2088, Cys2080–Cys2097, Cys2099–Cys2111, Cys2117–Cys2131, Cys2125–Cys2140, Cys2142–Cys2159, Cys2166–Cys2180, Cys2174–Cys2189, Cys2191–Cys2207, Cys2214–Cys2228, Cys2222–Cys2237, Cys2239–Cys2257, Cys2264–Cys2278, Cys2272–Cys2287, Cys2289–Cys2307, Cys2314–Cys2327, Cys2321–Cys2336, Cys2338–Cys2357, Cys2364–Cys2377, Cys2371–Cys2386, Cys2388–Cys2407, Cys2413–Cys2425, Cys2419–Cys2435, Cys2437–Cys2454, Cys2460–Cys2474, Cys2468–Cys2483, and Cys2485–Cys2503. The disordered stretch occupies residues 2492 to 2521 (RSPDSSQRGRVCEPPPPPSPPPRHPCQDPE). Residues 2504–2515 (EPPPPPSPPPRH) are compositionally biased toward pro residues. Cystine bridges form between Cys2517–Cys2531, Cys2525–Cys2541, Cys2543–Cys2562, Cys2569–Cys2583, Cys2577–Cys2594, Cys2596–Cys2615, Cys2622–Cys2636, Cys2630–Cys2645, Cys2647–Cys2665, Cys2672–Cys2686, Cys2680–Cys2695, Cys2697–Cys2713, Cys2720–Cys2734, Cys2728–Cys2743, Cys2745–Cys2762, Cys2767–Cys2781, Cys2775–Cys2790, Cys2792–Cys2810, Cys2837–Cys2850, Cys2842–Cys2856, and Cys2858–Cys2871. The SEA 1 domain occupies 2873–2999 (EVQETPFELR…GSLRVASDTD (127 aa)). Asn2944 is a glycosylation site (N-linked (GlcNAc...) asparagine). The EGF-like 47 domain maps to 3009-3048 (EWGNCGGMSCKEHLKEVCIAGHICGCPDGMKRRDANSECR). Cystine bridges form between Cys3013-Cys3026, Cys3018-Cys3032, and Cys3034-Cys3047. An SEA 2 domain is found at 3049 to 3174 (VVESWNVPLW…SELYLNPTQP (126 aa)). N-linked (GlcNAc...) asparagine glycans are attached at residues Asn3120 and Asn3130. 3 EGF-like domains span residues 3176–3220 (PFNP…KKCL), 3224–3272 (GFNE…SLCV), and 3272–3324 (VLDY…TLCM). 15 disulfide bridges follow: Cys3180–Cys3191, Cys3185–Cys3201, Cys3203–Cys3219, Cys3228–Cys3242, Cys3236–Cys3251, Cys3253–Cys3271, Cys3276–Cys3288, Cys3282–Cys3297, Cys3299–Cys3323, Cys3332–Cys3345, Cys3339–Cys3354, Cys3356–Cys3372, Cys3377–Cys3386, Cys3380–Cys3397, and Cys3399–Cys3408. The N-linked (GlcNAc...) asparagine glycan is linked to Asn3285. The 46-residue stretch at 3328 to 3373 (DVDECALGLNNCSGVAHCIDRAVGYTCKCPDGYIDGNPDEPGRVCG) folds into the EGF-like 51; calcium-binding domain. The N-linked (GlcNAc...) asparagine; atypical glycan is linked to Asn3337. An N-linked (GlcNAc...) asparagine glycan is attached at Asn3338. The EGF-like 52 domain occupies 3373–3409 (GALLCDLCNAHGDCVHNTATNNITCVCTDGWTGPQCQ). The N-linked (GlcNAc...) asparagine glycan is linked to Asn3394. Asn3414 carries N-linked (GlcNAc...) asparagine glycosylation. The chain crosses the membrane as a helical span at residues 3418–3438 (VLLILLALLFLLLTLCCLLYF). The Cytoplasmic portion of the chain corresponds to 3439 to 3767 (CTKCHCFKGR…SQTSTHVTKK (329 aa)). The disordered stretch occupies residues 3582–3729 (TTTTDEQGNT…EEDVEHSVGD (148 aa)). The segment covering 3588 to 3597 (QGNTIVTTTE) has biased composition (polar residues). Residues 3630–3665 (QSQSQQQQSMSQGMSQSMSQHATSAGYSSSGMESSA) show a composition bias toward low complexity. Over residues 3675–3684 (HTGERERGGS) the composition is skewed to basic and acidic residues. Residues 3690 to 3702 (IGRARGMAAASSG) show a composition bias toward low complexity.

Expressed in the hypodermis at the sites of muscle contact, in striated muscles including body wall muscles, the anal sphincter muscles and the junctions between the anal sphincter muscle and rectal cuticle. Also expressed in non-muscle cells including the excretory duct cell and pore cells.

It localises to the cell membrane. The protein resides in the cell junction. It is found in the hemidesmosome. Involved in cell adhesion and required for organ positioning and attachment. At the hypodermal surface, required for attachment of the hypdermermis to the basal cuticle in postembryonic development, possibly through intermediate filaments of the cytoskeleton. This Caenorhabditis elegans protein is Transmembrane cell adhesion receptor mua-3.